The chain runs to 61 residues: Probable tautomerase LL0574 (61 aa).

The active-site Proton acceptor; via imino nitrogen is Pro2.

It belongs to the 4-oxalocrotonate tautomerase family.

This chain is Probable tautomerase LL0574, found in Lactococcus lactis subsp. lactis (strain IL1403) (Streptococcus lactis).